Here is a 412-residue protein sequence, read N- to C-terminus: DNA primase DnaG (412 aa).

One can recognise a Toprim domain in the interval 165–243 (PELIIVEGRA…KLDYVARAPT (79 aa)). The Mg(2+) site is built by Glu-171, Asp-216, and Asp-218.

The protein belongs to the archaeal DnaG primase family. Forms a ternary complex with MCM helicase and DNA. Component of the archaeal exosome complex. The cofactor is Mg(2+).

The enzyme catalyses ssDNA + n NTP = ssDNA/pppN(pN)n-1 hybrid + (n-1) diphosphate.. RNA polymerase that catalyzes the synthesis of short RNA molecules used as primers for DNA polymerase during DNA replication. Also part of the exosome, which is a complex involved in RNA degradation. Acts as a poly(A)-binding protein that enhances the interaction between heteromeric, adenine-rich transcripts and the exosome. The sequence is that of DNA primase DnaG from Sulfolobus acidocaldarius (strain ATCC 33909 / DSM 639 / JCM 8929 / NBRC 15157 / NCIMB 11770).